A 785-amino-acid chain; its full sequence is Putative lipase C4A8.10 (785 aa).

Disordered stretches follow at residues 29 to 99 (HSAT…SSDF) and 115 to 140 (NTNA…VGTS). The segment covering 32 to 41 (TSSTTVPPTV) has biased composition (low complexity). Residues 47–58 (TKKESGSIEDRA) are compositionally biased toward basic and acidic residues. Residues 63–86 (MTISSGENISKQISENNSSTNPKH) are compositionally biased toward polar residues. 2 stretches are compositionally biased toward low complexity: residues 89–99 (SESSPLLSSDF) and 127–140 (GVSH…VGTS). Ser-390 acts as the Charge relay system in catalysis.

This sequence belongs to the putative lipase ROG1 family.

The polypeptide is Putative lipase C4A8.10 (Schizosaccharomyces pombe (strain 972 / ATCC 24843) (Fission yeast)).